Consider the following 72-residue polypeptide: Translation initiation factor IF-1 (72 aa).

One can recognise an S1-like domain in the interval 1 to 72 (MSKDDVIEVE…TRGRIIYRHK (72 aa)).

The protein belongs to the IF-1 family. Component of the 30S ribosomal translation pre-initiation complex which assembles on the 30S ribosome in the order IF-2 and IF-3, IF-1 and N-formylmethionyl-tRNA(fMet); mRNA recruitment can occur at any time during PIC assembly.

The protein resides in the cytoplasm. In terms of biological role, one of the essential components for the initiation of protein synthesis. Stabilizes the binding of IF-2 and IF-3 on the 30S subunit to which N-formylmethionyl-tRNA(fMet) subsequently binds. Helps modulate mRNA selection, yielding the 30S pre-initiation complex (PIC). Upon addition of the 50S ribosomal subunit IF-1, IF-2 and IF-3 are released leaving the mature 70S translation initiation complex. The chain is Translation initiation factor IF-1 from Carboxydothermus hydrogenoformans (strain ATCC BAA-161 / DSM 6008 / Z-2901).